The chain runs to 241 residues: Small ribosomal subunit protein uS2c (241 aa).

It belongs to the universal ribosomal protein uS2 family.

It is found in the plastid. It localises to the chloroplast. The chain is Small ribosomal subunit protein uS2c (rps2) from Porphyra purpurea (Red seaweed).